We begin with the raw amino-acid sequence, 155 residues long: Large ribosomal subunit protein uL22c (155 aa).

It belongs to the universal ribosomal protein uL22 family. Part of the 50S ribosomal subunit.

The protein resides in the plastid. Its subcellular location is the chloroplast. This protein binds specifically to 23S rRNA. Functionally, the globular domain of the protein is located near the polypeptide exit tunnel on the outside of the subunit, while an extended beta-hairpin is found that lines the wall of the exit tunnel in the center of the 70S ribosome. The protein is Large ribosomal subunit protein uL22c (rpl22) of Nicotiana tomentosiformis (Tobacco).